The primary structure comprises 142 residues: Galactose-6-phosphate isomerase subunit LacA (142 aa).

The protein belongs to the LacAB/RpiB family. Heteromultimeric protein consisting of LacA and LacB.

The catalysed reaction is aldehydo-D-galactose 6-phosphate = keto-D-tagatose 6-phosphate. It functions in the pathway carbohydrate metabolism; D-galactose 6-phosphate degradation; D-tagatose 6-phosphate from D-galactose 6-phosphate: step 1/1. This Staphylococcus aureus (strain JH9) protein is Galactose-6-phosphate isomerase subunit LacA.